We begin with the raw amino-acid sequence, 167 residues long: Large ribosomal subunit protein uL10 (167 aa).

The protein belongs to the universal ribosomal protein uL10 family. As to quaternary structure, part of the ribosomal stalk of the 50S ribosomal subunit. The N-terminus interacts with L11 and the large rRNA to form the base of the stalk. The C-terminus forms an elongated spine to which L12 dimers bind in a sequential fashion forming a multimeric L10(L12)X complex.

Functionally, forms part of the ribosomal stalk, playing a central role in the interaction of the ribosome with GTP-bound translation factors. The protein is Large ribosomal subunit protein uL10 of Erwinia tasmaniensis (strain DSM 17950 / CFBP 7177 / CIP 109463 / NCPPB 4357 / Et1/99).